Reading from the N-terminus, the 429-residue chain is Enolase (429 aa).

(2R)-2-phosphoglycerate is bound at residue Gln-162. The Proton donor role is filled by Glu-204. 3 residues coordinate Mg(2+): Asp-241, Glu-288, and Asp-315. Lys-340, Arg-369, Ser-370, and Lys-391 together coordinate (2R)-2-phosphoglycerate. Residue Lys-340 is the Proton acceptor of the active site.

This sequence belongs to the enolase family. Requires Mg(2+) as cofactor.

The protein resides in the cytoplasm. The protein localises to the secreted. Its subcellular location is the cell surface. It catalyses the reaction (2R)-2-phosphoglycerate = phosphoenolpyruvate + H2O. Its pathway is carbohydrate degradation; glycolysis; pyruvate from D-glyceraldehyde 3-phosphate: step 4/5. Catalyzes the reversible conversion of 2-phosphoglycerate (2-PG) into phosphoenolpyruvate (PEP). It is essential for the degradation of carbohydrates via glycolysis. The chain is Enolase from Bacteroides fragilis (strain ATCC 25285 / DSM 2151 / CCUG 4856 / JCM 11019 / LMG 10263 / NCTC 9343 / Onslow / VPI 2553 / EN-2).